Here is a 101-residue protein sequence, read N- to C-terminus: Apolipoprotein C-II (101 aa).

The N-terminal stretch at Met1–Gly22 is a signal peptide. The interval Ala66–Met74 is lipid binding. The interval Ser78 to Glu101 is lipoprotein lipase cofactor.

The protein belongs to the apolipoprotein C2 family. Proapolipoprotein C-II is synthesized as a sialic acid containing glycoprotein which is subsequently desialylated prior to its proteolytic processing. Post-translationally, proapolipoprotein C-II, the major form found in plasma undergoes proteolytic cleavage of its N-terminal hexapeptide to generate apolipoprotein C-II, which occurs as the minor form in plasma.

Its subcellular location is the secreted. Functionally, component of chylomicrons, very low-density lipoproteins (VLDL), low-density lipoproteins (LDL), and high-density lipoproteins (HDL) in plasma. Plays an important role in lipoprotein metabolism as an activator of lipoprotein lipase. Both proapolipoprotein C-II and apolipoprotein C-II can activate lipoprotein lipase. The chain is Apolipoprotein C-II (APOC2) from Saimiri boliviensis boliviensis (Bolivian squirrel monkey).